A 147-amino-acid polypeptide reads, in one-letter code: D-aminoacyl-tRNA deacylase (147 aa).

The Gly-cisPro motif, important for rejection of L-amino acids signature appears at G136–P137.

This sequence belongs to the DTD family. In terms of assembly, homodimer.

It is found in the cytoplasm. It carries out the reaction glycyl-tRNA(Ala) + H2O = tRNA(Ala) + glycine + H(+). The catalysed reaction is a D-aminoacyl-tRNA + H2O = a tRNA + a D-alpha-amino acid + H(+). An aminoacyl-tRNA editing enzyme that deacylates mischarged D-aminoacyl-tRNAs. Also deacylates mischarged glycyl-tRNA(Ala), protecting cells against glycine mischarging by AlaRS. Acts via tRNA-based rather than protein-based catalysis; rejects L-amino acids rather than detecting D-amino acids in the active site. By recycling D-aminoacyl-tRNA to D-amino acids and free tRNA molecules, this enzyme counteracts the toxicity associated with the formation of D-aminoacyl-tRNA entities in vivo and helps enforce protein L-homochirality. The chain is D-aminoacyl-tRNA deacylase from Streptococcus pneumoniae serotype 2 (strain D39 / NCTC 7466).